An 877-amino-acid chain; its full sequence is Alanine--tRNA ligase (877 aa).

Positions 562, 566, 664, and 668 each coordinate Zn(2+).

The protein belongs to the class-II aminoacyl-tRNA synthetase family. It depends on Zn(2+) as a cofactor.

It localises to the cytoplasm. The catalysed reaction is tRNA(Ala) + L-alanine + ATP = L-alanyl-tRNA(Ala) + AMP + diphosphate. Its function is as follows. Catalyzes the attachment of alanine to tRNA(Ala) in a two-step reaction: alanine is first activated by ATP to form Ala-AMP and then transferred to the acceptor end of tRNA(Ala). Also edits incorrectly charged Ser-tRNA(Ala) and Gly-tRNA(Ala) via its editing domain. This chain is Alanine--tRNA ligase, found in Synechocystis sp. (strain ATCC 27184 / PCC 6803 / Kazusa).